The sequence spans 123 residues: Histone H2B (123 aa).

Residues 1–30 (MPPKTSGKAAKKAGKAQKNITKTDKKKKRR) form a disordered region. Proline 2 carries the N-methylproline; partial modification. An N6-succinyllysine modification is found at lysine 44. Serine 110 carries an O-linked (GlcNAc) serine glycan. N6-succinyllysine is present on residues lysine 114 and lysine 118. Lysine 118 is covalently cross-linked (Glycyl lysine isopeptide (Lys-Gly) (interchain with G-Cter in ubiquitin)).

Belongs to the histone H2B family. As to quaternary structure, the nucleosome is a histone octamer containing two molecules each of H2A, H2B, H3 and H4 assembled in one H3-H4 heterotetramer and two H2A-H2B heterodimers. The octamer wraps approximately 147 bp of DNA. Post-translationally, phosphorylated by the catalytic component of the Dbf4-dependent kinase (DDK) complex Cdc7. Monoubiquitination of Lys-118 by Bre1 gives a specific tag for epigenetic transcriptional activation and is also prerequisite for histone H3 'Lys-4' and 'Lys-79' methylation. Deubiquitination of Lys-118 by the SAGA complex is involved in activating transcription of a large subset of genes. In terms of processing, methylation at Pro-2 increases upon heat shock. Post-translationally, glcNAcylation at Ser-110 promotes monoubiquitination of Lys-118. It fluctuates in response to extracellular glucose, and associates with transcribed genes.

It is found in the nucleus. Its subcellular location is the chromosome. Core component of nucleosome. Nucleosomes wrap and compact DNA into chromatin, limiting DNA accessibility to the cellular machineries which require DNA as a template. Histones thereby play a central role in transcription regulation, DNA repair, DNA replication and chromosomal stability. DNA accessibility is regulated via a complex set of post-translational modifications of histones, also called histone code, and nucleosome remodeling. This Drosophila yakuba (Fruit fly) protein is Histone H2B (His2B).